A 349-amino-acid chain; its full sequence is N-acetyltaurine hydrolase (349 aa).

Positions 26, 28, 169, 201, 230, and 298 each coordinate a divalent metal cation.

The protein belongs to the metallo-dependent hydrolases superfamily. Phosphotriesterase family. A divalent metal cation serves as cofactor.

The protein localises to the cytoplasm. It is found in the cytosol. The enzyme catalyses N-acetyltaurine + H2O = taurine + acetate. It catalyses the reaction N-propanoyltaurine + H2O = propanoate + taurine. It carries out the reaction N-acetyl-L-methionine + H2O = L-methionine + acetate. The catalysed reaction is N-acetyl-L-isoleucine + H2O = L-isoleucine + acetate. The enzyme catalyses N-acetyl-L-leucine + H2O = L-leucine + acetate. It catalyses the reaction N-acetyl-L-valine + H2O = L-valine + acetate. Its function is as follows. N-acetyltaurine hydrolase that catalyzes the hydrolysis of N-acetyltaurine into taurine and acetate. PTER also acts on other N-acetyl amino acids (Met, Ile, Leu, Val) and N-propionyltaurine, but at lower rates. In Salmo salar (Atlantic salmon), this protein is N-acetyltaurine hydrolase (pter).